The sequence spans 827 residues: Periplasmic nitrate reductase (827 aa).

Residues 1-32 (MELSRRDFMKANAAVAAAAAAGIVLPVKNVQA) constitute a signal peptide (tat-type signal). One can recognise a 4Fe-4S Mo/W bis-MGD-type domain in the interval 37–93 (IKWDKAPCRFCGTGCSVLVGTKDGRVVATQGDPDAEVNRGLNCIKGYFLSKIMYGAD). The [4Fe-4S] cluster site is built by cysteine 44, cysteine 47, cysteine 51, and cysteine 79. Residues lysine 81, glutamine 148, asparagine 173, cysteine 177, 210–217 (WGSNMAEM), 241–245 (STFEH), methionine 371, glutamine 375, asparagine 481, 507–508 (SD), lysine 530, aspartate 557, and 717–726 (TGRVLEHWHT) contribute to the Mo-bis(molybdopterin guanine dinucleotide) site. Phenylalanine 793 contacts substrate. 2 residues coordinate Mo-bis(molybdopterin guanine dinucleotide): asparagine 801 and lysine 818.

Belongs to the prokaryotic molybdopterin-containing oxidoreductase family. NasA/NapA/NarB subfamily. In terms of assembly, component of the periplasmic nitrate reductase NapAB complex composed of NapA and NapB. The cofactor is [4Fe-4S] cluster. Mo-bis(molybdopterin guanine dinucleotide) serves as cofactor. Post-translationally, predicted to be exported by the Tat system. The position of the signal peptide cleavage has not been experimentally proven.

It localises to the periplasm. It carries out the reaction 2 Fe(II)-[cytochrome] + nitrate + 2 H(+) = 2 Fe(III)-[cytochrome] + nitrite + H2O. Catalytic subunit of the periplasmic nitrate reductase complex NapAB. Receives electrons from NapB and catalyzes the reduction of nitrate to nitrite. This is Periplasmic nitrate reductase from Haemophilus ducreyi (strain 35000HP / ATCC 700724).